The chain runs to 369 residues: UDP-glucose 4-epimerase 4 (369 aa).

19–50 (TVLVTGGAGYIGSHTVLQLLAAGFRVVVADSL) contacts NAD(+). Serine 144 contributes to the substrate binding site. The active-site Proton acceptor is tyrosine 168.

It belongs to the NAD(P)-dependent epimerase/dehydratase family. The cofactor is NAD(+).

The catalysed reaction is UDP-alpha-D-glucose = UDP-alpha-D-galactose. It participates in carbohydrate metabolism; galactose metabolism. Catalyzes the interconversion between UDP-glucose and UDP-galactose. The sequence is that of UDP-glucose 4-epimerase 4 (UGE-4) from Oryza sativa subsp. japonica (Rice).